The following is a 153-amino-acid chain: Histone H2B.10 (153 aa).

Basic and acidic residues-rich tracts occupy residues 1-28 (MAPK…EKAP) and 36-53 (EKRL…EGKK). Positions 1–61 (MAPKAEKKPA…KKAGRKKAKK (61 aa)) are disordered. Residues Lys7 and Lys37 each carry the N6-acetyllysine modification. A Glycyl lysine isopeptide (Lys-Gly) (interchain with G-Cter in ubiquitin) cross-link involves residue Lys149.

It belongs to the histone H2B family. The nucleosome is a histone octamer containing two molecules each of H2A, H2B, H3 and H4 assembled in one H3-H4 heterotetramer and two H2A-H2B heterodimers. The octamer wraps approximately 147 bp of DNA. Post-translationally, can be acetylated to form H2BK6ac and H2BK33ac. Monoubiquitinated by BRE1 to form H2BK143ub1 and deubiquitinated by UBP26. Required for heterochromatic histone H3 di- and trimethylation at H3K4me. May give a specific tag for epigenetic transcriptional activation.

The protein localises to the nucleus. The protein resides in the chromosome. Functionally, core component of nucleosome. Nucleosomes wrap and compact DNA into chromatin, limiting DNA accessibility to the cellular machineries which require DNA as a template. Histones thereby play a central role in transcription regulation, DNA repair, DNA replication and chromosomal stability. DNA accessibility is regulated via a complex set of post-translational modifications of histones, also called histone code, and nucleosome remodeling. The protein is Histone H2B.10 (H2B.10) of Oryza sativa subsp. indica (Rice).